Reading from the N-terminus, the 196-residue chain is METIALGVEPRVIRKKEAAKLRKNGIVPAVIYHKGEETVAVSVNEIALNKLVHSAESHIIDLQFPDGKTLRSFIKDVQFDPVSDRIIHTDFQLFAADEVVEMEVPVAISGDSIGVEKGGKILILRHALTIQGLPANMPDHVTIDVTNLDMGHIIHVREIPMDAYTGLSIMDEPETPVISIAPPKKDAEAETESAAG.

A disordered region spans residues 177–196 (VISIAPPKKDAEAETESAAG).

This sequence belongs to the bacterial ribosomal protein bL25 family. CTC subfamily. In terms of assembly, part of the 50S ribosomal subunit; part of the 5S rRNA/L5/L18/L25 subcomplex. Contacts the 5S rRNA. Binds to the 5S rRNA independently of L5 and L18.

In terms of biological role, this is one of the proteins that binds to the 5S RNA in the ribosome where it forms part of the central protuberance. This is Large ribosomal subunit protein bL25 from Chlorobium limicola (strain DSM 245 / NBRC 103803 / 6330).